Reading from the N-terminus, the 559-residue chain is Chromatin assembly factor 1 subunit B (559 aa).

WD repeat units lie at residues 11 to 54 (HNKE…DGKA), 64 to 103 (RHTK…EPEQ), 127 to 166 (GHLE…KISI), 169 to 208 (EHKS…VAFN), 228 to 279 (FHDD…RPIA), 299 to 340 (ELRP…PFGY), and 344 to 385 (IHYH…IPLK). A disordered region spans residues 386–559 (EKPVLNMRTP…NKGGTESLDP (174 aa)). T394 bears the Phosphothreonine mark. S409 carries the post-translational modification Phosphoserine. The residue at position 419 (T419) is a Phosphothreonine. Residue S429 is modified to Phosphoserine. Positions 430 to 444 (PGTTPPQARQAPAPT) are enriched in low complexity. Position 433 is a phosphothreonine (T433). S458 carries the post-translational modification Phosphoserine. A compositionally biased stretch (polar residues) spans 469–495 (LQPSSQNTKAHPSRRVTLNTLQAWSKT). At K494 the chain carries N6-acetyllysine. Residues T495, T509, T521, and T531 each carry the phosphothreonine modification. Low complexity predominate over residues 509-526 (TPPSSVPTSVISTPSTEE). The residue at position 538 (S538) is a Phosphoserine. A compositionally biased stretch (basic and acidic residues) spans 541-552 (ELKRPRLDENKG).

The protein belongs to the WD repeat HIR1 family. In terms of assembly, subunit of the CAF-1 complex that contains RBBP4, CHAF1B and CHAF1A. CHAF1A binds directly to CHAF1B. Only minor amounts of RBBP4 are complexed with CHAF1A and CHAF1B in G1 phase. In G2 and S phase also monomeric CHAF1B is detected. Interacts with histones H3.1, H3.2 and H3.1t. Differentially phosphorylated during cell cycle. During mitosis the p60 subunit of inactive CAF-1 is hyperphosphorylated and displaced into the cytosol. Progressivly dephosphorylated from G1 to S and G2 phase. Phosphorylated p60 is recruited to chromatin undergoing DNA repair after UV irradiation in G1, S or G2 phases.

The protein resides in the nucleus. Its subcellular location is the cytoplasm. In terms of biological role, acts as a component of the histone chaperone complex chromatin assembly factor 1 (CAF-1), which assembles histone octamers onto DNA during replication and repair. CAF-1 performs the first step of the nucleosome assembly process, bringing newly synthesized histones H3 and H4 to replicating DNA; histones H2A/H2B can bind to this chromatin precursor subsequent to DNA replication to complete the histone octamer. The chain is Chromatin assembly factor 1 subunit B from Homo sapiens (Human).